The sequence spans 126 residues: Aspartate 1-decarboxylase (126 aa).

The active-site Schiff-base intermediate with substrate; via pyruvic acid is the serine 25. Serine 25 bears the Pyruvic acid (Ser) mark. Substrate is bound at residue threonine 57. The active-site Proton donor is tyrosine 58. Substrate is bound at residue 73 to 75 (GAA).

This sequence belongs to the PanD family. In terms of assembly, heterooctamer of four alpha and four beta subunits. Requires pyruvate as cofactor. Post-translationally, is synthesized initially as an inactive proenzyme, which is activated by self-cleavage at a specific serine bond to produce a beta-subunit with a hydroxyl group at its C-terminus and an alpha-subunit with a pyruvoyl group at its N-terminus.

Its subcellular location is the cytoplasm. The enzyme catalyses L-aspartate + H(+) = beta-alanine + CO2. The protein operates within cofactor biosynthesis; (R)-pantothenate biosynthesis; beta-alanine from L-aspartate: step 1/1. Functionally, catalyzes the pyruvoyl-dependent decarboxylation of aspartate to produce beta-alanine. In Chromohalobacter salexigens (strain ATCC BAA-138 / DSM 3043 / CIP 106854 / NCIMB 13768 / 1H11), this protein is Aspartate 1-decarboxylase.